We begin with the raw amino-acid sequence, 46 residues long: ATCRKPSMYFSGACFSDTNCQKACNREDWPNGKCLVGFKCECQRPC.

Cystine bridges form between C3/C46, C14/C34, C20/C40, and C24/C42.

In terms of tissue distribution, leaves and flowers.

Strong inhibiting activity against C.beticola and other filamentous fungi. Little or no effect against bacteria. This Beta vulgaris (Sugar beet) protein is Defensin-like protein AX2.